The primary structure comprises 204 residues: Recombination protein RecR (204 aa).

Residues 59–74 (CTRCNTFTELEICGTC) form a C4-type zinc finger. A Toprim domain is found at 82–181 (TLLCVVETPA…KVSRLARGVP (100 aa)).

The protein belongs to the RecR family.

Its function is as follows. May play a role in DNA repair. It seems to be involved in an RecBC-independent recombinational process of DNA repair. It may act with RecF and RecO. This is Recombination protein RecR from Cupriavidus metallidurans (strain ATCC 43123 / DSM 2839 / NBRC 102507 / CH34) (Ralstonia metallidurans).